A 387-amino-acid chain; its full sequence is Galanin receptor type 2 (387 aa).

The Extracellular portion of the chain corresponds to 1–28 (MNVSGCPGAGNASQAGGGGGWHPEAVIV). Asn-2 and Asn-11 each carry an N-linked (GlcNAc...) asparagine glycan. A helical transmembrane segment spans residues 29–49 (PLLFALIFLVGTVGNTLVLAV). The Cytoplasmic portion of the chain corresponds to 50 to 60 (LLRGGQAVSTT). A helical transmembrane segment spans residues 61–81 (NLFILNLGVADLCFILCCVPF). Residues 82-99 (QATIYTLDGWVFGSLLCK) are Extracellular-facing. An intrachain disulfide couples Cys-98 to Cys-175. A helical membrane pass occupies residues 100–121 (AVHFLIFLTMHASSFTLAAVSL). Over 122–141 (DRYLAIRYPLHSRELRTPRN) the chain is Cytoplasmic. Residues 142–162 (ALAAIGLIWGLSLLFSGPYLS) traverse the membrane as a helical segment. Over 163-187 (YYRQSQLANLTVCHPAWSAPRRRAM) the chain is Extracellular. A helical transmembrane segment spans residues 188–208 (DICTFVFSYLLPVLVLGLTYA). Topologically, residues 209-237 (RTLRYLWRAVDPVAAGSGARRAKRKVTRM) are cytoplasmic. A helical membrane pass occupies residues 238–258 (ILIVAALFCLCWMPHHALILC). The Extracellular portion of the chain corresponds to 259-260 (VW). A helical membrane pass occupies residues 261–281 (FGQFPLTRATYALRILSHLVS). The Cytoplasmic portion of the chain corresponds to 282 to 387 (YANSCVNPIV…GDSILTVDVA (106 aa)).

Belongs to the G-protein coupled receptor 1 family. Expressed abundantly within the central nervous system in both hypothalamus and hippocampus. In peripheral tissues, the strongest expression was observed in heart, kidney, liver, and small intestine.

The protein localises to the cell membrane. Its function is as follows. Receptor for the hormone galanin and GALP. Receptor for the hormone spexin-1. The activity of this receptor is mediated by G proteins that activate the phospholipase C/protein kinase C pathway (via G(q)) and that inhibit adenylyl cyclase (via G(i)). The polypeptide is Galanin receptor type 2 (GALR2) (Homo sapiens (Human)).